Reading from the N-terminus, the 394-residue chain is Na(+)/H(+) antiporter NhaA (394 aa).

Helical transmembrane passes span 17-37, 59-79, 95-115, 124-144, 154-174, 177-197, 213-233, 261-281, 287-307, 328-348, and 363-383; these read ILLM…LAGV, LLLW…GLEV, SLPS…YLAF, VGWA…MALL, VFLL…IALF, TDLS…MVAL, FILW…GVII, FMIL…NMTL, PITL…VLLF, IIPV…IASL, and LGIL…LAKV.

It belongs to the NhaA Na(+)/H(+) (TC 2.A.33) antiporter family.

The protein resides in the cell inner membrane. It catalyses the reaction Na(+)(in) + 2 H(+)(out) = Na(+)(out) + 2 H(+)(in). In terms of biological role, na(+)/H(+) antiporter that extrudes sodium in exchange for external protons. The sequence is that of Na(+)/H(+) antiporter NhaA from Shewanella frigidimarina (strain NCIMB 400).